The sequence spans 284 residues: Isopentenyl-diphosphate Delta-isomerase II, chloroplastic (284 aa).

A chloroplast-targeting transit peptide spans 1 to 45 (MSASSLFNLPLIRLRSLALSSSFSSFRFAHRPLSSISPRKLPNFR). N-acetylalanine is present on alanine 46. Lysine 88 provides a ligand contact to substrate. Mg(2+) contacts are provided by histidine 92 and histidine 104. The Nudix hydrolase domain maps to 102-254 (LLHRAFSVFL…GLKLSPWFRL (153 aa)). 2 residues coordinate substrate: arginine 123 and lysine 127. Cysteine 139 is a catalytic residue. Position 140 (serine 140) interacts with substrate. Residues 140–170 (SHPLYRESELIQDNALGVRNAAQRKLLDELG) carry the Nudix box motif. Mg(2+)-binding residues include glutamate 199 and glutamate 201. Residue glutamate 201 is part of the active site.

This sequence belongs to the IPP isomerase type 1 family. Mg(2+) serves as cofactor.

It is found in the plastid. It localises to the chloroplast. The catalysed reaction is isopentenyl diphosphate = dimethylallyl diphosphate. It functions in the pathway isoprenoid biosynthesis; dimethylallyl diphosphate biosynthesis; dimethylallyl diphosphate from isopentenyl diphosphate: step 1/1. Its pathway is porphyrin-containing compound metabolism; chlorophyll biosynthesis. Functionally, catalyzes the 1,3-allylic rearrangement of the homoallylic substrate isopentenyl (IPP) to its highly electrophilic allylic isomer, dimethylallyl diphosphate (DMAPP). The sequence is that of Isopentenyl-diphosphate Delta-isomerase II, chloroplastic (IPP2) from Arabidopsis thaliana (Mouse-ear cress).